Consider the following 266-residue polypeptide: 3-methyl-2-oxobutanoate hydroxymethyltransferase (266 aa).

2 residues coordinate Mg(2+): D47 and D86. 3-methyl-2-oxobutanoate-binding positions include 47–48 (DS), D86, and K114. E116 contacts Mg(2+). The active-site Proton acceptor is E183.

The protein belongs to the PanB family. As to quaternary structure, homodecamer; pentamer of dimers. Mg(2+) serves as cofactor.

It is found in the cytoplasm. The enzyme catalyses 3-methyl-2-oxobutanoate + (6R)-5,10-methylene-5,6,7,8-tetrahydrofolate + H2O = 2-dehydropantoate + (6S)-5,6,7,8-tetrahydrofolate. It functions in the pathway cofactor biosynthesis; (R)-pantothenate biosynthesis; (R)-pantoate from 3-methyl-2-oxobutanoate: step 1/2. Its function is as follows. Catalyzes the reversible reaction in which hydroxymethyl group from 5,10-methylenetetrahydrofolate is transferred onto alpha-ketoisovalerate to form ketopantoate. In Idiomarina loihiensis (strain ATCC BAA-735 / DSM 15497 / L2-TR), this protein is 3-methyl-2-oxobutanoate hydroxymethyltransferase.